The primary structure comprises 361 residues: Myb/SANT-like DNA-binding domain-containing protein 7 (361 aa).

Residues 11–70 enclose the Myb-like domain; the sequence is RWSRQETRTLLSILGEAEYIQRLQTVHHNADVYQAVSKRMQQEGFRRTERQCRSKFKVLK. 2 disordered regions span residues 174–198 and 217–272; these read TSDL…SYSS and RLGV…ARRR. Composition is skewed to polar residues over residues 187–198 and 226–249; these read AGCSQGTPSYSS and PCTS…SSSR.

The chain is Myb/SANT-like DNA-binding domain-containing protein 7 from Homo sapiens (Human).